Consider the following 396-residue polypeptide: DNA polymerase IV (396 aa).

The region spanning 2–182 is the UmuC domain; that stretch reads ILHVDMDAFY…LPVSRLWGVG (181 aa). Mg(2+)-binding residues include Asp6 and Asp100. The active site involves Glu101.

Belongs to the DNA polymerase type-Y family. As to quaternary structure, monomer. Mg(2+) is required as a cofactor.

It localises to the cytoplasm. It carries out the reaction DNA(n) + a 2'-deoxyribonucleoside 5'-triphosphate = DNA(n+1) + diphosphate. Its function is as follows. Poorly processive, error-prone DNA polymerase involved in untargeted mutagenesis. Copies undamaged DNA at stalled replication forks, which arise in vivo from mismatched or misaligned primer ends. These misaligned primers can be extended by PolIV. Exhibits no 3'-5' exonuclease (proofreading) activity. May be involved in translesional synthesis, in conjunction with the beta clamp from PolIII. This Rhodopirellula baltica (strain DSM 10527 / NCIMB 13988 / SH1) protein is DNA polymerase IV.